The following is a 785-amino-acid chain: Penicillin-binding protein 1A (785 aa).

The segment at 1–61 is disordered; that stretch reads MPPDDRLTAV…SGPGGPSGPG (61 aa). Pro residues predominate over residues 33–45; sequence SPPPKPPPPPPPG. A compositionally biased stretch (gly residues) spans 46–59; the sequence is RGGGGPSGPGGPSG. The chain crosses the membrane as a helical span at residues 77-97; that stretch reads IAVAVMVLLPLITFGMAYMIV. The tract at residues 118–299 is transglycosylase; the sequence is GSEIARIVPP…RWNWVLDGMV (182 aa). Catalysis depends on E151, which acts as the Proton donor; for transglycosylase activity. Residues 392 to 662 are transpeptidase; it reads AVVSIDPRTG…EGVKPLVNKW (271 aa). S426 serves as the catalytic Acyl-ester intermediate; for transpeptidase activity. Disordered regions lie at residues 605-626, 690-726, and 738-785; these read SRGH…VQLG, ESFP…QPSV, and GITI…PPPP. Pro residues-rich tracts occupy residues 708 to 721 and 743 to 758; these read PAAP…PTDP and IGPP…PGAP. The span at 759–775 shows a compositional bias: low complexity; sequence GAPVGPGAPEVPVAPGA.

Its subcellular location is the cell membrane. It catalyses the reaction [GlcNAc-(1-&gt;4)-Mur2Ac(oyl-L-Ala-gamma-D-Glu-L-Lys-D-Ala-D-Ala)](n)-di-trans,octa-cis-undecaprenyl diphosphate + beta-D-GlcNAc-(1-&gt;4)-Mur2Ac(oyl-L-Ala-gamma-D-Glu-L-Lys-D-Ala-D-Ala)-di-trans,octa-cis-undecaprenyl diphosphate = [GlcNAc-(1-&gt;4)-Mur2Ac(oyl-L-Ala-gamma-D-Glu-L-Lys-D-Ala-D-Ala)](n+1)-di-trans,octa-cis-undecaprenyl diphosphate + di-trans,octa-cis-undecaprenyl diphosphate + H(+). It carries out the reaction Preferential cleavage: (Ac)2-L-Lys-D-Ala-|-D-Ala. Also transpeptidation of peptidyl-alanyl moieties that are N-acyl substituents of D-alanine.. The protein operates within cell wall biogenesis; peptidoglycan biosynthesis. Functionally, cell wall formation. Synthesis of cross-linked peptidoglycan from the lipid intermediates. The enzyme has a penicillin-insensitive transglycosylase N-terminal domain (formation of linear glycan strands) and a penicillin-sensitive transpeptidase C-terminal domain (cross-linking of the peptide subunits). This chain is Penicillin-binding protein 1A (ponA1), found in Mycolicibacterium smegmatis (strain ATCC 700084 / mc(2)155) (Mycobacterium smegmatis).